The chain runs to 210 residues: Ribosomal RNA large subunit methyltransferase E (210 aa).

S-adenosyl-L-methionine contacts are provided by Gly60, Trp62, Asp80, Asp96, and Asp121. Residue Lys161 is the Proton acceptor of the active site.

The protein belongs to the class I-like SAM-binding methyltransferase superfamily. RNA methyltransferase RlmE family.

It is found in the cytoplasm. It carries out the reaction uridine(2552) in 23S rRNA + S-adenosyl-L-methionine = 2'-O-methyluridine(2552) in 23S rRNA + S-adenosyl-L-homocysteine + H(+). In terms of biological role, specifically methylates the uridine in position 2552 of 23S rRNA at the 2'-O position of the ribose in the fully assembled 50S ribosomal subunit. In Vesicomyosocius okutanii subsp. Calyptogena okutanii (strain HA), this protein is Ribosomal RNA large subunit methyltransferase E.